The following is a 203-amino-acid chain: SPbeta prophage-derived uncharacterized lipoprotein YonS (203 aa).

Residues 1 to 21 (MKLFKKLGILLLITSLILLAA) form the signal peptide. Residue Cys22 is the site of N-palmitoyl cysteine attachment. Cys22 is lipidated: S-diacylglycerol cysteine. The segment covering 27–46 (ESSSSSEDTNNATDTNTSES) has biased composition (low complexity). The interval 27 to 57 (ESSSSSEDTNNATDTNTSESQDISVNGPEKV) is disordered.

The protein resides in the cell membrane. In Bacillus subtilis (strain 168), this protein is SPbeta prophage-derived uncharacterized lipoprotein YonS (yonS).